Here is a 1702-residue protein sequence, read N- to C-terminus: DNA polymerase (1702 aa).

2 DOD-type homing endonuclease domains span residues 776-909 and 1229-1368; these read LLGY…SLGI and LVGL…IVGI.

Belongs to the DNA polymerase type-B family. In terms of processing, this protein undergoes a protein self splicing that involves a post-translational excision of the two intervening regions (inteins) followed by peptide ligation.

The catalysed reaction is DNA(n) + a 2'-deoxyribonucleoside 5'-triphosphate = DNA(n+1) + diphosphate. Its function is as follows. In addition to polymerase activity, this DNA polymerase exhibits 3' to 5' exonuclease activity. Functionally, intein encoded endonucleases are thought to mediate intein mobility by site-specific recombination initiated by endonuclease cleavage at the 'homing site' in gene that lack the intein. This is DNA polymerase (pol) from Thermococcus litoralis.